Here is a 381-residue protein sequence, read N- to C-terminus: Cytochrome b (381 aa).

4 helical membrane passes run 31-51, 75-97, 112-132, and 178-198; these read FGFLSSICLIVQILTGIFLAM, WLLRYIHTNGASMFFIVVYIHIF, VWVIGVLILLLMILTAFIGYV, and FFSLHYLMPFVIAAVSLVHLA. Positions 81 and 95 each coordinate heme b. Heme b contacts are provided by histidine 182 and histidine 196. Histidine 201 provides a ligand contact to a ubiquinone. The next 4 helical transmembrane spans lie at 224-244, 288-308, 320-340, and 347-367; these read FIVKDFLGMVIFIIFFSIFVY, LGGVTAMISAIAILAFLPWIH, LYRLFYWVMISCCLILGWIGG, and YVIIGQIASIYYFIYFIILLP.

This sequence belongs to the cytochrome b family. As to quaternary structure, the main subunits of complex b-c1 are: cytochrome b, cytochrome c1 and the Rieske protein. Heme b is required as a cofactor.

The protein localises to the mitochondrion inner membrane. Its function is as follows. Component of the ubiquinol-cytochrome c reductase complex (complex III or cytochrome b-c1 complex) that is part of the mitochondrial respiratory chain. The b-c1 complex mediates electron transfer from ubiquinol to cytochrome c. Contributes to the generation of a proton gradient across the mitochondrial membrane that is then used for ATP synthesis. The protein is Cytochrome b (MT-CYB) of Chondrus crispus (Carrageen Irish moss).